A 128-amino-acid chain; its full sequence is Large ribosomal subunit protein bL12 (128 aa).

Belongs to the bacterial ribosomal protein bL12 family. In terms of assembly, homodimer. Part of the ribosomal stalk of the 50S ribosomal subunit. Forms a multimeric L10(L12)X complex, where L10 forms an elongated spine to which 2 to 4 L12 dimers bind in a sequential fashion. Binds GTP-bound translation factors.

Forms part of the ribosomal stalk which helps the ribosome interact with GTP-bound translation factors. Is thus essential for accurate translation. The polypeptide is Large ribosomal subunit protein bL12 (Corynebacterium kroppenstedtii (strain DSM 44385 / JCM 11950 / CIP 105744 / CCUG 35717)).